Reading from the N-terminus, the 605-residue chain is Formin-binding protein 1-like (605 aa).

Positions 1–263 constitute an F-BAR domain; the sequence is MSWGTELWDQ…AAKSVDERRD (263 aa). A coiled-coil region spans residues 66–258; that stretch reads FTSCVAFFNI…EGMILAAKSV (193 aa). The segment at 245–535 is interaction with CDC42; the sequence is SKCLEGMILA…EFDDEFEDDD (291 aa). Ser-295 carries the post-translational modification Phosphoserine. Positions 392–484 form a coiled coil; sequence LEDFSHLPPE…VEGKTGGRGD (93 aa). One can recognise an REM-1 domain in the interval 397–474; that stretch reads HLPPEQRRKK…IHKNEAWLSE (78 aa). The span at 476-490 shows a compositional bias: basic and acidic residues; that stretch reads EGKTGGRGDRRHSSD. The tract at residues 476 to 539 is disordered; sequence EGKTGGRGDR…EFEDDDPLPA (64 aa). 3 positions are modified to phosphoserine: Ser-488, Ser-501, and Ser-505. Residues 522–605 are interaction with DNM1; the sequence is GHHNEFDDEF…VTLEKNSKGS (84 aa). Over residues 527 to 536 the composition is skewed to acidic residues; that stretch reads FDDEFEDDDP. One can recognise an SH3 domain in the interval 538-599; that stretch reads PAIGHCKAIY…PTSYIDVTLE (62 aa). An interaction with DNM2 and WASL region spans residues 541-597; the sequence is GHCKAIYPFDGHNEGTLAMKEGEVLYIIEEDKGDGWTRARRQNGEEGYVPTSYIDVT. The tract at residues 541–605 is interaction with DAAM1, DIAPH1 and DIAPH2; that stretch reads GHCKAIYPFD…VTLEKNSKGS (65 aa).

This sequence belongs to the FNBP1 family. In terms of assembly, homodimerizes, the dimers can polymerize end-to-end to form filamentous structures. Interacts with GTP-bound CDC42. Interacts with DAAM1, DIAPH1, DIAPH2, DNM1, DNM2 and WASL/N-WASP. Interacts with ATG3. Interacts (via SH3 domain) with ABI1, WASF2, CDC42 and WIPF1.

It localises to the cytoplasm. The protein localises to the cytoskeleton. Its subcellular location is the cell cortex. The protein resides in the cytoplasmic vesicle. It is found in the cell membrane. Required to coordinate membrane tubulation with reorganization of the actin cytoskeleton during endocytosis. May bind to lipids such as phosphatidylinositol 4,5-bisphosphate and phosphatidylserine and promote membrane invagination and the formation of tubules. Also promotes CDC42-induced actin polymerization by activating the WASL/N-WASP-WASPIP/WIP complex, the predominant form of WASL/N-WASP in cells. Actin polymerization may promote the fission of membrane tubules to form endocytic vesicles. Essential for autophagy of intracellular bacterial pathogens. This chain is Formin-binding protein 1-like (FNBP1L), found in Homo sapiens (Human).